A 299-amino-acid polypeptide reads, in one-letter code: Probable alpha-L-glutamate ligase (299 aa).

In terms of domain architecture, ATP-grasp spans 111 to 293 (LQALAAANIA…VATQMIAYLE (183 aa)). ATP contacts are provided by residues lysine 147, 184 to 185 (DF), aspartate 193, and 217 to 219 (RAN). Mg(2+) contacts are provided by aspartate 254, glutamate 266, and asparagine 268. Residues aspartate 254, glutamate 266, and asparagine 268 each coordinate Mn(2+).

The protein belongs to the RimK family. Requires Mg(2+) as cofactor. The cofactor is Mn(2+).

This is Probable alpha-L-glutamate ligase from Mannheimia succiniciproducens (strain KCTC 0769BP / MBEL55E).